The sequence spans 96 residues: ATP-dependent Clp protease adapter protein ClpS (96 aa).

Belongs to the ClpS family. Binds to the N-terminal domain of the chaperone ClpA.

Involved in the modulation of the specificity of the ClpAP-mediated ATP-dependent protein degradation. In Campylobacter jejuni subsp. jejuni serotype O:2 (strain ATCC 700819 / NCTC 11168), this protein is ATP-dependent Clp protease adapter protein ClpS.